The primary structure comprises 61 residues: Temporin-ALj (61 aa).

A signal peptide spans 1 to 22; that stretch reads MFTLKKSLLLLFFLATINLSFC. The propeptide occupies 23–46; the sequence is EQERNAEEERRDEPDERNAEVEKR. A Leucine amide modification is found at L59.

This sequence belongs to the frog skin active peptide (FSAP) family. Temporin subfamily. Expressed by the skin glands.

It is found in the secreted. Functionally, antimicrobial peptide with activity against Gram-positive and Gram-negative bacteria and against fungi. Has been tested against S.aureus (MIC=7.5 ug/mL), B.pumilus (MIC=15.0 ug/mL), B.cereus (MIC=75.0 ug/mL), E.coli (MIC=15.0 ug/mL), B.dysenteriae (MIC=30.0 ug/mL), A.cacoaceticus (MIC=60.0 ug/mL), P.aeruginosa (MIC=7.5 ug/mL) and C.albicans (MIC=5.0 ug/mL). Also shows a weak hemolytic activity. This Amolops loloensis (Lolokou Sucker Frog) protein is Temporin-ALj.